Reading from the N-terminus, the 1276-residue chain is MMAKTLQGTQQQYAASGFPTQQYPTSGWTQSAAEILQLDNMDQDTSVVRNIIHRKIVEYLNERKEFCNFDLSFLMEIGKCIDRHLFEKADSKIKYMDLETLRTRLNAIVNSASFRGSMFHWSASAASSKLNSQQLPVMEVPIYHDRVTPGPNNLPSCAYNVSSTQGYNQYENCMGAANFAHSLADKPKQMPERLANTIFTSCASTLPKCSPSIDVLHIGHIKEHFSGDAYQNDSSQPSTSGSSSSLSAVWDQTTCSSAMRTLPMDSFSTVNGQNLSTNNKSLYPTTGQGPLLQQYIECEMKQETWSRSLEQSDQSNITTGNRDLYHAQIHPYINGEHKRDRCIQMKEKLGHTSDHEGFSREKSSNLSNHFMHHQQGFMTNYGACSPVSKTVDRAEQTSNSTVSKPTSPASDGSSGKHYPAKRLKVDVPHLVHVNEMEASKEQQPAANETYASAETVQSEVTNSPTKSPCCTSLGDNIACTDNVHGMDMVRLSGSAVQTEEEFRRENSDIEMKDAKVDLLDQTLSGDSLRARKRRGASVLYALTSEELKDHLCTLNHDTSQSKVPTEELLSVEGLPDQNTCNLCGMERLLFEPPPRFCALCFKIINSTGSYYVEVENGNDKSSICGRCHHLSSAKAKYQKRFSYAETDAEAEWWVQCDKCKAWQHQICALFNPKIVDPEAEYTCAKCFLKEKDNEDVDSLEPSTILGARELPRTRLSDHIEQRLSERLVQERQQRAIASGKSVDEVPGVEGLTVRVVSSADRTLQVQPRFKDFFKKEQYPGEFPYKSKAILLFQKNEGVDVCLFAMYVQEYGSACPSPNQRHVYLAYIDSVKYFRPEIKSASGEALRTFVYHEILIGYLDFCKKRGFVSCSIWTCPSTKRDDYVLYCHPTIQKMPKSDKLRSWYQNLVKKAVKEGVVVERNTLYDFFLQPTNECKTNISAAWLPYCDNDFWPGEAERLLEKKDDDTSQKKETQLGRLLRVAKRDDRKGNLEDILLVHKLGERLRTMKEDFLMLCLQQFCKHCHHPIVSGSSWVCTSCKNFFLCERCYAEELNTPLKDRHPATTKQKHAFERIEEEPLPETDDVDPTMESKYFDSRIDFLKHCQDNQYQFDTLRRAKHSTMMILYHLHDSTCSSCHRAMDQCLAWRCLVCLGCNFCDSCYKQDGESLHIHKLRQKKDHHVLQKYTLQDYLEGLVHASRCFDRSCTSKLCLTLKKLFFHGVRCHTRARGGGGCHMCVFMWKLLFTHSLLCDNADCSAPRCRDIKAYIADRSMTDLSISG.

Residues 391 to 421 (VDRAEQTSNSTVSKPTSPASDGSSGKHYPAK) are disordered. Positions 396 to 413 (QTSNSTVSKPTSPASDGS) are enriched in polar residues. Residues 621 to 689 (SSICGRCHHL…EYTCAKCFLK (69 aa)) form a PHD-type zinc finger. The CBP/p300-type HAT domain occupies 704–1130 (ILGARELPRT…ILYHLHDSTC (427 aa)). Residues 827 to 829 (IDS), 846 to 847 (RT), and W902 each bind acetyl-CoA. The stretch at 953–973 (EAERLLEKKDDDTSQKKETQL) forms a coiled coil. 2 ZZ-type zinc fingers span residues 1013–1076 (CLQQ…EEPL) and 1125–1187 (LHDS…LQDY). Residues C1018, C1021, C1033, C1036, C1042, C1045, H1058, H1066, C1130, C1133, C1145, C1148, C1154, C1157, H1168, and H1177 each coordinate Zn(2+). The segment at 1177–1260 (HVLQKYTLQD…DCSAPRCRDI (84 aa)) adopts a TAZ-type zinc-finger fold.

It localises to the nucleus. It carries out the reaction L-lysyl-[protein] + acetyl-CoA = N(6)-acetyl-L-lysyl-[protein] + CoA + H(+). In terms of biological role, acetyltransferase enzyme. Acetylates histones, giving a specific tag for transcriptional activation. This chain is Probable histone acetyltransferase HAC-like 3, found in Oryza sativa subsp. japonica (Rice).